A 28-amino-acid polypeptide reads, in one-letter code: MLPRKYKPAYKKQAHRVKSNPQPAYTFQ.

The span at 1 to 18 shows a compositional bias: basic residues; sequence MLPRKYKPAYKKQAHRVK. Residues 1–28 are disordered; it reads MLPRKYKPAYKKQAHRVKSNPQPAYTFQ. Residues 19–28 are compositionally biased toward polar residues; it reads SNPQPAYTFQ.

This is an uncharacterized protein from Saccharomyces cerevisiae (strain ATCC 204508 / S288c) (Baker's yeast).